The chain runs to 128 residues: ATP synthase epsilon chain (128 aa).

Positions 98–128 (EALDMPSSTPEQAQIKDAAVRRARGQLRASR) are disordered. The span at 118–128 (RRARGQLRASR) shows a compositional bias: basic residues.

It belongs to the ATPase epsilon chain family. In terms of assembly, F-type ATPases have 2 components, CF(1) - the catalytic core - and CF(0) - the membrane proton channel. CF(1) has five subunits: alpha(3), beta(3), gamma(1), delta(1), epsilon(1). CF(0) has three main subunits: a, b and c.

Its subcellular location is the cell inner membrane. Functionally, produces ATP from ADP in the presence of a proton gradient across the membrane. The chain is ATP synthase epsilon chain from Rhodopirellula baltica (strain DSM 10527 / NCIMB 13988 / SH1).